Here is a 260-residue protein sequence, read N- to C-terminus: Thiazole synthase (260 aa).

K96 acts as the Schiff-base intermediate with DXP in catalysis. 1-deoxy-D-xylulose 5-phosphate-binding positions include G157, 184-185 (AG), and 206-207 (NT).

Belongs to the ThiG family. In terms of assembly, homotetramer. Forms heterodimers with either ThiH or ThiS.

It is found in the cytoplasm. The catalysed reaction is [ThiS sulfur-carrier protein]-C-terminal-Gly-aminoethanethioate + 2-iminoacetate + 1-deoxy-D-xylulose 5-phosphate = [ThiS sulfur-carrier protein]-C-terminal Gly-Gly + 2-[(2R,5Z)-2-carboxy-4-methylthiazol-5(2H)-ylidene]ethyl phosphate + 2 H2O + H(+). It functions in the pathway cofactor biosynthesis; thiamine diphosphate biosynthesis. Its function is as follows. Catalyzes the rearrangement of 1-deoxy-D-xylulose 5-phosphate (DXP) to produce the thiazole phosphate moiety of thiamine. Sulfur is provided by the thiocarboxylate moiety of the carrier protein ThiS. In vitro, sulfur can be provided by H(2)S. This is Thiazole synthase from Rhodopseudomonas palustris (strain ATCC BAA-98 / CGA009).